Consider the following 542-residue polypeptide: MRPSCASSSSSSASPSLRLSSVTVAVDKATSELLRTPDWTIIIAICDSLNSNRWQCKDAIKAVKRRLQHKSSRVQLLTLTLLEAMLKNCGDFVHSHIAEKHLLEDMVKLVRKKGDFEVRNKLLILLDTWNEAFSGVACKHPHYNWAYQELKRCGVKFPQRSKEAPLMLEPPPPVTQSSSSSSMNLMSIGSFRRLDETMATEIESLSLSSLESMRNVMDLVNDMVQAVNPSDKSALKDELIVDLVEQCRSNQKKLIQMLTTTADEDVLARGLELNDSLQVVLARHDAIASGVSLPLLLQAPEPRETSSSLKTCGAAALESADSESSSSSSSSESETDEVEDVKDDFIQLAKRHALLNALHSDEEEETLLLGNDNEKTAEAEAKTQCKDLALFDTTTTTTTKSEQDIIELLSLTLSTTALPSPQTQPQTQHPSFFADDNILMNSYVVPWAQSQEEPQVPKMTQFAPSGPQFQPWPLQQQQPYSYGYPQPQWSGGQVNSNDTTFWSQGGNENMVFERNLQVSNSFPARATGTSGAATAATVDRQP.

The 130-residue stretch at 29 to 158 (ATSELLRTPD…ELKRCGVKFP (130 aa)) folds into the VHS domain. Ser-161 carries the post-translational modification Phosphoserine. One can recognise a GAT domain in the interval 201-289 (EIESLSLSSL…VLARHDAIAS (89 aa)). The interval 303–340 (RETSSSLKTCGAAALESADSESSSSSSSSESETDEVED) is disordered. Residues 314-332 (AAALESADSESSSSSSSSE) are compositionally biased toward low complexity. At Ser-521 the chain carries Phosphoserine. The interval 522–542 (FPARATGTSGAATAATVDRQP) is disordered. A compositionally biased stretch (low complexity) spans 524–542 (ARATGTSGAATAATVDRQP).

It belongs to the TOM1 family. In terms of tissue distribution, preferentially expressed in flowers.

The protein resides in the membrane. Functionally, might contribute to the loading of the ESCRT machinery. In Arabidopsis thaliana (Mouse-ear cress), this protein is TOM1-like protein 7.